A 336-amino-acid polypeptide reads, in one-letter code: Protein-lysine N-methyltransferase EFM3 (336 aa).

Residues Trp147, 173-175 (GTG), Asp196, Leu232, and Ala251 each bind S-adenosyl-L-methionine.

It belongs to the class I-like SAM-binding methyltransferase superfamily. EEF2KMT family.

The protein localises to the cytoplasm. In terms of biological role, S-adenosyl-L-methionine-dependent protein-lysine N-methyltransferase that methylates elongation factor 2. The sequence is that of Protein-lysine N-methyltransferase EFM3 from Chaetomium thermophilum (strain DSM 1495 / CBS 144.50 / IMI 039719) (Thermochaetoides thermophila).